Here is a 118-residue protein sequence, read N- to C-terminus: Aspartate 1-decarboxylase (118 aa).

The Schiff-base intermediate with substrate; via pyruvic acid role is filled by serine 25. Residue serine 25 is modified to Pyruvic acid (Ser). Position 57 (threonine 57) interacts with substrate. Catalysis depends on tyrosine 58, which acts as the Proton donor. A substrate-binding site is contributed by 73 to 75 (GAA).

This sequence belongs to the PanD family. In terms of assembly, heterooctamer of four alpha and four beta subunits. Pyruvate serves as cofactor. Is synthesized initially as an inactive proenzyme, which is activated by self-cleavage at a specific serine bond to produce a beta-subunit with a hydroxyl group at its C-terminus and an alpha-subunit with a pyruvoyl group at its N-terminus.

It is found in the cytoplasm. The catalysed reaction is L-aspartate + H(+) = beta-alanine + CO2. Its pathway is cofactor biosynthesis; (R)-pantothenate biosynthesis; beta-alanine from L-aspartate: step 1/1. Its function is as follows. Catalyzes the pyruvoyl-dependent decarboxylation of aspartate to produce beta-alanine. The sequence is that of Aspartate 1-decarboxylase from Syntrophomonas wolfei subsp. wolfei (strain DSM 2245B / Goettingen).